Here is a 66-residue protein sequence, read N- to C-terminus: Sarcoplasmic/endoplasmic reticulum calcium ATPase regulator ARLN (66 aa).

M1 carries the N-acetylmethionine modification. The tract at residues 1–38 is disordered; sequence MEVDVPGVDGRDGLRERRGLSEGGRQNLDVRPQSGANG. A compositionally biased stretch (basic and acidic residues) spans 9–20; sequence DGRDGLRERRGL. A helical transmembrane segment spans residues 45-65; it reads WLDLWLFIFFDVVVFLFVYFL.

In terms of assembly, homooligomer. Can also form heterooligomers with other sarcoplasmic/endoplasmic reticulum calcium ATPase (SERCA) regulators ERLN, PLN, SLN and STRIT1/DWORF. Monomer. Interacts as a monomer with ATP2A2/SERCA2; the interaction results in inhibition of ATP2A2 Ca(2+) affinity.

It is found in the endoplasmic reticulum membrane. In terms of biological role, inhibits the activity of the calcium ATPases ATP2A2/SERCA2 and ATP2A3/SERCA3 by decreasing their apparent affinity for Ca(2+). The protein is Sarcoplasmic/endoplasmic reticulum calcium ATPase regulator ARLN (ARLN) of Pongo abelii (Sumatran orangutan).